Consider the following 424-residue polypeptide: Acetyl-CoA acetyltransferase, mitochondrial (424 aa).

Residues 1 to 30 (MAALVALHGVVRRPLLRGLLQEVRCLERSY) constitute a mitochondrion transit peptide. An N6-acetyllysine; alternate modification is found at lysine 63. Lysine 63 bears the N6-succinyllysine; alternate mark. Lysine 75 bears the N6-succinyllysine mark. The active-site Acyl-thioester intermediate is cysteine 123. An N6-acetyllysine; alternate mark is found at lysine 171, lysine 178, lysine 187, and lysine 199. An N6-succinyllysine; alternate mark is found at lysine 171, lysine 178, lysine 187, and lysine 199. The residue at position 204 (serine 204) is a Phosphoserine. Tyrosine 216 is a binding site for CoA. Tyrosine 216 lines the K(+) pocket. 2 positions are modified to N6-acetyllysine; alternate: lysine 220 and lysine 227. Lysine 220 and lysine 227 each carry N6-succinyllysine; alternate. Residue lysine 240 is modified to N6-succinyllysine. At lysine 242 the chain carries N6-acetyllysine; alternate. Residue lysine 242 is modified to N6-succinyllysine; alternate. 2 positions are modified to N6-acetyllysine: lysine 248 and lysine 254. Residues 255 to 257 (RVD) and lysine 260 each bind CoA. An N6-acetyllysine; alternate modification is found at lysine 260. Residue lysine 260 is modified to N6-succinyllysine; alternate. Residues lysine 263 and lysine 265 each carry the N6-succinyllysine modification. Lysine 270 carries the N6-acetyllysine modification. Residues alanine 277, alanine 278, and alanine 280 each contribute to the K(+) site. Serine 281 is a CoA binding site. Lysine 335 is subject to N6-acetyllysine. Valine 378 lines the K(+) pocket. Residue cysteine 410 is the Proton donor/acceptor of the active site.

This sequence belongs to the thiolase-like superfamily. Thiolase family. As to quaternary structure, homotetramer. Succinylation at Lys-265, adjacent to a coenzyme A binding site. Desuccinylated by SIRT5.

The protein localises to the mitochondrion. It catalyses the reaction 2 acetyl-CoA = acetoacetyl-CoA + CoA. The catalysed reaction is propanoyl-CoA + acetyl-CoA = 2-methyl-3-oxobutanoyl-CoA + CoA. Its pathway is lipid metabolism; fatty acid beta-oxidation. With respect to regulation, activated by potassium ions, but not sodium ions. In terms of biological role, this is one of the enzymes that catalyzes the last step of the mitochondrial beta-oxidation pathway, an aerobic process breaking down fatty acids into acetyl-CoA. Using free coenzyme A/CoA, catalyzes the thiolytic cleavage of medium- to long-chain 3-oxoacyl-CoAs into acetyl-CoA and a fatty acyl-CoA shortened by two carbon atoms. The activity of the enzyme is reversible and it can also catalyze the condensation of two acetyl-CoA molecules into acetoacetyl-CoA. Thereby, it plays a major role in ketone body metabolism. This Mus musculus (Mouse) protein is Acetyl-CoA acetyltransferase, mitochondrial (Acat1).